Here is a 711-residue protein sequence, read N- to C-terminus: C6 finger domain transcription factor nscR (711 aa).

A DNA-binding region (zn(2)-C6 fungal-type) is located at residues 17-43 (CELCRERKVKCDKLDPCTNCSSAGVIC). Residues 372–394 (SPPKHINDSDFDPTTSHDVPDRE) form a disordered region.

It localises to the nucleus. In terms of biological role, transcription factor that specifically regulates the neosartoricin B biosynthesis gene cluster. This chain is C6 finger domain transcription factor nscR, found in Trichophyton tonsurans (strain CBS 112818) (Scalp ringworm fungus).